Consider the following 317-residue polypeptide: Transaldolase (317 aa).

Residue lysine 132 is the Schiff-base intermediate with substrate of the active site.

This sequence belongs to the transaldolase family. Type 1 subfamily. In terms of assembly, homodimer.

It localises to the cytoplasm. It catalyses the reaction D-sedoheptulose 7-phosphate + D-glyceraldehyde 3-phosphate = D-erythrose 4-phosphate + beta-D-fructose 6-phosphate. The protein operates within carbohydrate degradation; pentose phosphate pathway; D-glyceraldehyde 3-phosphate and beta-D-fructose 6-phosphate from D-ribose 5-phosphate and D-xylulose 5-phosphate (non-oxidative stage): step 2/3. In terms of biological role, transaldolase is important for the balance of metabolites in the pentose-phosphate pathway. The polypeptide is Transaldolase (Pseudoalteromonas atlantica (strain T6c / ATCC BAA-1087)).